Reading from the N-terminus, the 519-residue chain is MNTKPQLTLLKVQASYRGDPTTLFHQLCGARPATLLLESAEINDKQNLQSLLVIDSALPITALGHTVSVQALTANGPALLPVLDEALPPEVRNQARPNGRELTFPAIDAVQDEDARLRSLSVFDALRTLLTLVDSPADEREAVMLGGLFAYDLVAGFENLPAVRQDQRCPDFCFYLAETLLVLDHQRGSARLQASVFSEQASEAQRLQHRLEQLQAELQQPPQPIPHQKLENMQLSCNQSDEEYGAVVSELQEAIRQGEIFQVVPSRRFSLPCPAPLGPYQTLKDNNPSPYMFFMQDDDFTLFGASPESALKYDAGNRQIEIYPIAGTRPRGRRADGSLDLDLDSRIELEMRTDHKELAEHLMLVDLARNDLARICQAGSRYVADLTKVDRYSFVMHLVSRVVGTLRADLDVLHAYQACMNMGTLSGAPKVRAMQLIAALRSTRRGSYGGRVGYFTAHRHLDTCIVIRSAYVEDGHRTVQAGAGVVQDSIRRREADETRNKARAVLRAIATAHHAKEVF.

L-tryptophan is bound by residues serine 39 and 290–292 (PYM). 327 to 328 (GT) is a chorismate binding site. Glutamate 360 contributes to the Mg(2+) binding site. Residues tyrosine 448, arginine 468, 482–484 (GAG), and glycine 484 contribute to the chorismate site. Glutamate 497 contributes to the Mg(2+) binding site.

It belongs to the anthranilate synthase component I family. In terms of assembly, heterotetramer consisting of two non-identical subunits: a beta subunit (TrpG) and a large alpha subunit (TrpE). It depends on Mg(2+) as a cofactor.

The enzyme catalyses chorismate + L-glutamine = anthranilate + pyruvate + L-glutamate + H(+). It functions in the pathway amino-acid biosynthesis; L-tryptophan biosynthesis; L-tryptophan from chorismate: step 1/5. Its activity is regulated as follows. Feedback inhibited by tryptophan. Functionally, part of a heterotetrameric complex that catalyzes the two-step biosynthesis of anthranilate, an intermediate in the biosynthesis of L-tryptophan. In the first step, the glutamine-binding beta subunit (TrpG) of anthranilate synthase (AS) provides the glutamine amidotransferase activity which generates ammonia as a substrate that, along with chorismate, is used in the second step, catalyzed by the large alpha subunit of AS (TrpE) to produce anthranilate. In the absence of TrpG, TrpE can synthesize anthranilate directly from chorismate and high concentrations of ammonia. This chain is Anthranilate synthase component 1 (trpE), found in Serratia marcescens.